We begin with the raw amino-acid sequence, 146 residues long: Oleosin (146 aa).

An N-acetylalanine modification is found at A2. Helical transmembrane passes span 22–42 (ILGFITLFVSGAILLLLTGLT), 56–76 (VLIFFSPILIPVATVLFVAVA), and 77–97 (GFLSAGGFGLAALSAISWLYN). A Proline-knot motif is present at residues 55–66 (PVLIFFSPILIP).

Belongs to the oleosin family. In terms of tissue distribution, expressed in pollen (at protein level).

It localises to the lipid droplet. The protein localises to the membrane. The chain is Oleosin from Pinus elliottii (Slash pine).